The chain runs to 87 residues: MAKALFFNFCISLLIIAILVSHEIIPTEARHLRTHRKSIKNSTLTVHEGAGGLRTGGGSVKTDISKEEHGVDEFRPTTPGNSPGIGH.

A signal peptide spans 1-29; sequence MAKALFFNFCISLLIIAILVSHEIIPTEA. The propeptide occupies 30–72; that stretch reads RHLRTHRKSIKNSTLTVHEGAGGLRTGGGSVKTDISKEEHGVD. Asn41 carries an N-linked (GlcNAc...) asparagine glycan. Residues 41–87 are disordered; the sequence is NSTLTVHEGAGGLRTGGGSVKTDISKEEHGVDEFRPTTPGNSPGIGH. The segment covering 49-59 has biased composition (gly residues); the sequence is GAGGLRTGGGS. Positions 63-75 are enriched in basic and acidic residues; that stretch reads DISKEEHGVDEFR. A hydroxyproline mark is found at Pro76, Pro79, and Pro83.

The protein belongs to the C-terminally encoded plant signaling peptide (CEP) family. As to quaternary structure, interacts with CEP receptors (e.g. CEPR1 and CEPR2). Post-translationally, the mature small signaling peptide is generated by proteolytic processing of the longer precursor. Expressed in lateral root primordia and in lateral roots excluding the meristem region. Also present in the aerial tissues, such as leaf petioles and the shoot apex region.

Its subcellular location is the secreted. The protein localises to the extracellular space. The protein resides in the apoplast. Its function is as follows. Extracellular signaling peptide that may regulate primary root growth rate and systemic nitrogen (N)-demand signaling. Mediates up-regulation of genes involved in N uptake and assimilation pathways. The protein is Precursor of CEP8 of Arabidopsis thaliana (Mouse-ear cress).